Here is a 358-residue protein sequence, read N- to C-terminus: Alanine racemase (358 aa).

K35 acts as the Proton acceptor; specific for D-alanine in catalysis. An N6-(pyridoxal phosphate)lysine modification is found at K35. R130 is a binding site for substrate. The active-site Proton acceptor; specific for L-alanine is Y255. Residue M303 coordinates substrate.

This sequence belongs to the alanine racemase family. Pyridoxal 5'-phosphate is required as a cofactor.

It catalyses the reaction L-alanine = D-alanine. The protein operates within amino-acid biosynthesis; D-alanine biosynthesis; D-alanine from L-alanine: step 1/1. Functionally, catalyzes the interconversion of L-alanine and D-alanine. May also act on other amino acids. This chain is Alanine racemase (alr), found in Shewanella sediminis (strain HAW-EB3).